A 500-amino-acid polypeptide reads, in one-letter code: ATP synthase subunit alpha (500 aa).

G169–T176 contacts ATP.

The protein belongs to the ATPase alpha/beta chains family. In terms of assembly, F-type ATPases have 2 components, CF(1) - the catalytic core - and CF(0) - the membrane proton channel. CF(1) has five subunits: alpha(3), beta(3), gamma(1), delta(1), epsilon(1). CF(0) has three main subunits: a(1), b(2) and c(9-12). The alpha and beta chains form an alternating ring which encloses part of the gamma chain. CF(1) is attached to CF(0) by a central stalk formed by the gamma and epsilon chains, while a peripheral stalk is formed by the delta and b chains.

It is found in the cell membrane. It carries out the reaction ATP + H2O + 4 H(+)(in) = ADP + phosphate + 5 H(+)(out). Produces ATP from ADP in the presence of a proton gradient across the membrane. The alpha chain is a regulatory subunit. This is ATP synthase subunit alpha from Clostridioides difficile (strain 630) (Peptoclostridium difficile).